The chain runs to 226 residues: Ribose-5-phosphate isomerase A (226 aa).

Substrate contacts are provided by residues 28 to 31, 84 to 87, and 97 to 100; these read TGST, DGAD, and KGLG. E106 serves as the catalytic Proton acceptor. K124 contributes to the substrate binding site.

This sequence belongs to the ribose 5-phosphate isomerase family. In terms of assembly, homodimer.

It carries out the reaction aldehydo-D-ribose 5-phosphate = D-ribulose 5-phosphate. It participates in carbohydrate degradation; pentose phosphate pathway; D-ribose 5-phosphate from D-ribulose 5-phosphate (non-oxidative stage): step 1/1. Catalyzes the reversible conversion of ribose-5-phosphate to ribulose 5-phosphate. The sequence is that of Ribose-5-phosphate isomerase A from Deinococcus radiodurans (strain ATCC 13939 / DSM 20539 / JCM 16871 / CCUG 27074 / LMG 4051 / NBRC 15346 / NCIMB 9279 / VKM B-1422 / R1).